The primary structure comprises 126 residues: DNA-directed RNA polymerase I subunit RPA12 (126 aa).

The Zn(2+) site is built by C20, C23, C38, C41, C87, and C90. A C4-type zinc finger spans residues 20–41 (CSDCGSVLPLPGAQDTVTCTRC). A TFIIS-type zinc finger spans residues 83-123 (VDRRCPRCGHEGMAYHTRQMRSADEGQTVFYTCTNCKFQEK). The Hairpin motif lies at 106–107 (DE). Zn(2+)-binding residues include C115 and C118.

It belongs to the archaeal RpoM/eukaryotic RPA12/RPB9/RPC11 RNA polymerase family. As to quaternary structure, component of the RNA polymerase I (Pol I) complex consisting of 13 subunits: a ten-subunit catalytic core composed of POLR1A/RPA1, POLR1B/RPA2, POLR1C/RPAC1, POLR1D/RPAC2, POLR1H/RPA12, POLR2E/RPABC1, POLR2F/RPABC2, POLR2H/RPABC3, POLR2K/RPABC4 and POLR2L/RPABC5; a mobile stalk subunit POLR1F/RPA43 protruding from the core and additional subunits homologous to general transcription factors POLR1E/RPA49 and POLR1G/RPA34. Part of Pol I pre-initiation complex (PIC), in which Pol I core assembles with RRN3 and promoter-bound UTBF and SL1/TIF-IB complex.

It localises to the nucleus. Its subcellular location is the nucleolus. Functionally, core component of RNA polymerase I (Pol I), a DNA-dependent RNA polymerase which synthesizes ribosomal RNA precursors using the four ribonucleoside triphosphates as substrates. Can mediate Pol I proofreading of the nascent RNA transcript. Anchors into the Pol I active site to monitor transcription fidelity and cleave mis-incorporated 5'-ribonucleotides. In Macaca mulatta (Rhesus macaque), this protein is DNA-directed RNA polymerase I subunit RPA12.